The chain runs to 422 residues: Enolase (422 aa).

Q162 is a (2R)-2-phosphoglycerate binding site. The Proton donor role is filled by E204. D241, E285, and D312 together coordinate Mg(2+). Residues K337, R366, S367, and K388 each coordinate (2R)-2-phosphoglycerate. Residue K337 is the Proton acceptor of the active site.

Belongs to the enolase family. Mg(2+) is required as a cofactor.

Its subcellular location is the cytoplasm. The protein localises to the secreted. The protein resides in the cell surface. The catalysed reaction is (2R)-2-phosphoglycerate = phosphoenolpyruvate + H2O. It functions in the pathway carbohydrate degradation; glycolysis; pyruvate from D-glyceraldehyde 3-phosphate: step 4/5. In terms of biological role, catalyzes the reversible conversion of 2-phosphoglycerate (2-PG) into phosphoenolpyruvate (PEP). It is essential for the degradation of carbohydrates via glycolysis. The protein is Enolase of Wolinella succinogenes (strain ATCC 29543 / DSM 1740 / CCUG 13145 / JCM 31913 / LMG 7466 / NCTC 11488 / FDC 602W) (Vibrio succinogenes).